Consider the following 387-residue polypeptide: Arrestin-C (387 aa).

Belongs to the arrestin family. As to expression, retina and pineal gland.

In terms of biological role, may play a role in an as yet undefined retina-specific signal transduction. Could bind to photoactivated-phosphorylated red/green opsins. In Xenopus laevis (African clawed frog), this protein is Arrestin-C (arr3).